The following is a 764-amino-acid chain: 5-methyltetrahydropteroyltriglutamate--homocysteine methyltransferase (764 aa).

Residues 17 to 20 (RELK) and Lys-117 each bind 5-methyltetrahydropteroyltri-L-glutamate. L-homocysteine contacts are provided by residues 437–439 (IGS) and Glu-490. Residues 437–439 (IGS) and Glu-490 each bind L-methionine. 5-methyltetrahydropteroyltri-L-glutamate-binding positions include 521-522 (RC) and Trp-567. An L-homocysteine-binding site is contributed by Asp-605. Residue Asp-605 coordinates L-methionine. Glu-611 contributes to the 5-methyltetrahydropteroyltri-L-glutamate binding site. 3 residues coordinate Zn(2+): His-647, Cys-649, and Glu-671. His-701 functions as the Proton donor in the catalytic mechanism. Residue Cys-733 coordinates Zn(2+).

Belongs to the vitamin-B12 independent methionine synthase family. Zn(2+) is required as a cofactor.

The enzyme catalyses 5-methyltetrahydropteroyltri-L-glutamate + L-homocysteine = tetrahydropteroyltri-L-glutamate + L-methionine. Its pathway is amino-acid biosynthesis; L-methionine biosynthesis via de novo pathway; L-methionine from L-homocysteine (MetE route): step 1/1. Its function is as follows. Catalyzes the transfer of a methyl group from 5-methyltetrahydrofolate to homocysteine resulting in methionine formation. The sequence is that of 5-methyltetrahydropteroyltriglutamate--homocysteine methyltransferase from Blochmanniella pennsylvanica (strain BPEN).